A 111-amino-acid polypeptide reads, in one-letter code: Ig kappa chain V-III region PC 2485/PC 4039 (111 aa).

The segment at 1–23 (DIVLTQSPASLAVSLGQRATISC) is framework-1. Cys-23 and Cys-92 are oxidised to a cystine. Residues 24-38 (RASKSVSTSGYSYMH) form a complementarity-determining-1 region. The framework-2 stretch occupies residues 39–53 (WYQQKPGQPPKLLIY). A complementarity-determining-2 region spans residues 54 to 60 (LASSLES). The interval 61–92 (GVPARFSGSGSGTDFTLNIQPVEEEDAAIYYC) is framework-3. The interval 93–101 (QHSRELPLT) is complementarity-determining-3. Residues 102–111 (FGAGTKLELK) are framework-4.

In Mus musculus (Mouse), this protein is Ig kappa chain V-III region PC 2485/PC 4039.